A 262-amino-acid polypeptide reads, in one-letter code: Tryptophan synthase alpha chain (262 aa).

Residues E48 and D59 each act as proton acceptor in the active site.

It belongs to the TrpA family. As to quaternary structure, tetramer of two alpha and two beta chains.

It carries out the reaction (1S,2R)-1-C-(indol-3-yl)glycerol 3-phosphate + L-serine = D-glyceraldehyde 3-phosphate + L-tryptophan + H2O. It functions in the pathway amino-acid biosynthesis; L-tryptophan biosynthesis; L-tryptophan from chorismate: step 5/5. Its function is as follows. The alpha subunit is responsible for the aldol cleavage of indoleglycerol phosphate to indole and glyceraldehyde 3-phosphate. The polypeptide is Tryptophan synthase alpha chain (Helicobacter pylori (strain Shi470)).